A 414-amino-acid chain; its full sequence is Argininosuccinate synthase (414 aa).

Residues 9–17 and alanine 35 contribute to the ATP site; that span reads AYSGGLDTS. Positions 86 and 91 each coordinate L-citrulline. 114–122 provides a ligand contact to ATP; the sequence is SHGATGKGN. L-aspartate is bound by residues threonine 118, asparagine 122, and aspartate 123. Asparagine 122 provides a ligand contact to L-citrulline. Residues arginine 126, serine 179, serine 188, glutamate 269, and tyrosine 281 each coordinate L-citrulline.

This sequence belongs to the argininosuccinate synthase family. Homotetramer.

The protein resides in the cytoplasm. The protein localises to the cytosol. It carries out the reaction L-citrulline + L-aspartate + ATP = 2-(N(omega)-L-arginino)succinate + AMP + diphosphate + H(+). It participates in amino-acid biosynthesis; L-arginine biosynthesis; L-arginine from L-ornithine and carbamoyl phosphate: step 2/3. The protein operates within nitrogen metabolism; urea cycle; (N(omega)-L-arginino)succinate from L-aspartate and L-citrulline: step 1/1. Its function is as follows. One of the enzymes of the urea cycle, the metabolic pathway transforming neurotoxic amonia produced by protein catabolism into inocuous urea in the liver of ureotelic animals. Catalyzes the formation of arginosuccinate from aspartate, citrulline and ATP and together with ASL it is responsible for the biosynthesis of arginine in most body tissues. This is Argininosuccinate synthase from Danio rerio (Zebrafish).